The chain runs to 859 residues: Chitin synthase 1 (859 aa).

Positions 1–22 (MRRWFKKTLPRPPDEEESAGLT) are disordered. A run of 5 helical transmembrane segments spans residues 544 to 564 (LATI…FYIL), 615 to 635 (MVIM…WIAY), 662 to 682 (FINI…VSII), 793 to 813 (YVVL…LSIP), and 833 to 853 (LWSV…YLFI).

It belongs to the chitin synthase family.

It is found in the cell membrane. The catalysed reaction is [(1-&gt;4)-N-acetyl-beta-D-glucosaminyl](n) + UDP-N-acetyl-alpha-D-glucosamine = [(1-&gt;4)-N-acetyl-beta-D-glucosaminyl](n+1) + UDP + H(+). Functionally, polymerizes chitin, a structural polymer of the cell wall and septum, by transferring the sugar moiety of UDP-GlcNAc to the non-reducing end of the growing chitin polymer. The sequence is that of Chitin synthase 1 (chs1) from Schizosaccharomyces pombe (strain 972 / ATCC 24843) (Fission yeast).